The primary structure comprises 131 residues: Aspartate 1-decarboxylase (131 aa).

The active-site Schiff-base intermediate with substrate; via pyruvic acid is the S25. Position 25 is a pyruvic acid (Ser) (S25). T57 contributes to the substrate binding site. Catalysis depends on Y58, which acts as the Proton donor. 73–75 contributes to the substrate binding site; the sequence is GSA.

This sequence belongs to the PanD family. In terms of assembly, heterooctamer of four alpha and four beta subunits. It depends on pyruvate as a cofactor. Is synthesized initially as an inactive proenzyme, which is activated by self-cleavage at a specific serine bond to produce a beta-subunit with a hydroxyl group at its C-terminus and an alpha-subunit with a pyruvoyl group at its N-terminus.

Its subcellular location is the cytoplasm. It catalyses the reaction L-aspartate + H(+) = beta-alanine + CO2. It participates in cofactor biosynthesis; (R)-pantothenate biosynthesis; beta-alanine from L-aspartate: step 1/1. Its function is as follows. Catalyzes the pyruvoyl-dependent decarboxylation of aspartate to produce beta-alanine. The chain is Aspartate 1-decarboxylase from Leptothrix cholodnii (strain ATCC 51168 / LMG 8142 / SP-6) (Leptothrix discophora (strain SP-6)).